The chain runs to 247 residues: Lipoprotein-releasing system ATP-binding protein LolD 2 (247 aa).

The 229-residue stretch at 19-247 folds into the ABC transporter domain; it reads LEARKLVKSY…QDGRLQACGG (229 aa). Residue 56–63 coordinates ATP; that stretch reads GASGSGKT.

It belongs to the ABC transporter superfamily. Lipoprotein translocase (TC 3.A.1.125) family. As to quaternary structure, the complex is composed of two ATP-binding proteins (LolD) and two transmembrane proteins (LolC and LolE).

It localises to the cell inner membrane. In terms of biological role, part of the ABC transporter complex LolCDE involved in the translocation of mature outer membrane-directed lipoproteins, from the inner membrane to the periplasmic chaperone, LolA. Responsible for the formation of the LolA-lipoprotein complex in an ATP-dependent manner. The chain is Lipoprotein-releasing system ATP-binding protein LolD 2 from Chlorobaculum tepidum (strain ATCC 49652 / DSM 12025 / NBRC 103806 / TLS) (Chlorobium tepidum).